The chain runs to 425 residues: Tyrosine--tRNA ligase (425 aa).

An L-tyrosine-binding site is contributed by tyrosine 37. Residues 42-51 carry the 'HIGH' region motif; the sequence is PTADSLHLGH. The L-tyrosine site is built by tyrosine 174 and glutamine 178. The short motif at 234-238 is the 'KMSKS' region element; that stretch reads KFGKS. Residue lysine 237 coordinates ATP. Positions 357–422 constitute an S4 RNA-binding domain; it reads DGLIDALAAS…RGKKLYALLV (66 aa).

This sequence belongs to the class-I aminoacyl-tRNA synthetase family. TyrS type 1 subfamily. Homodimer.

Its subcellular location is the cytoplasm. The catalysed reaction is tRNA(Tyr) + L-tyrosine + ATP = L-tyrosyl-tRNA(Tyr) + AMP + diphosphate + H(+). In terms of biological role, catalyzes the attachment of tyrosine to tRNA(Tyr) in a two-step reaction: tyrosine is first activated by ATP to form Tyr-AMP and then transferred to the acceptor end of tRNA(Tyr). In Laribacter hongkongensis (strain HLHK9), this protein is Tyrosine--tRNA ligase.